Here is a 226-residue protein sequence, read N- to C-terminus: Flagellar L-ring protein (226 aa).

The first 15 residues, 1 to 15 (MKRLAVSILCLALAG), serve as a signal peptide directing secretion. Cys-16 is lipidated: N-palmitoyl cysteine. Cys-16 is lipidated: S-diacylglycerol cysteine.

Belongs to the FlgH family. The basal body constitutes a major portion of the flagellar organelle and consists of four rings (L,P,S, and M) mounted on a central rod.

The protein resides in the cell outer membrane. It is found in the bacterial flagellum basal body. Its function is as follows. Assembles around the rod to form the L-ring and probably protects the motor/basal body from shearing forces during rotation. The polypeptide is Flagellar L-ring protein (Geobacter metallireducens (strain ATCC 53774 / DSM 7210 / GS-15)).